A 357-amino-acid chain; its full sequence is Velvet complex subunit 2 (357 aa).

The Velvet domain occupies 32 to 341 (RRAERKYKLE…AQQGIKIPIR (310 aa)).

It belongs to the velvet family. VelB subfamily. Component of the heterotrimeric velvet complex composed of LAE1, VEL1 and VEL2; VEL1A acting as a bridging protein between LAE1 and VEL2. Forms a heterodimeric complex with VOS1; the formation of the VEL2-VOS1 complex is light-dependent.

It localises to the nucleus. Its subcellular location is the cytoplasm. Component of the velvet transcription factor complex that controls sexual/asexual developmental ratio in response to light, promoting sexual development in the darkness while stimulating asexual sporulation under illumination. The velvet complex acts as a global regulator for secondary metabolite gene expression. Component of the VEL2-VOS1 heterodimeric complex that plays a dual role in activating genes associated with spore maturation and repressing certain development-associated genes. The complex binds DNA through the DNA-binding domain of VOS1 that recognizes an 11-nucleotide consensus sequence 5'-CTGGCCGCGGC-3' consisting of two motifs in the promoters of key developmental regulatory genes. The VEL2-VOS1 complex is required for normal pseudothecium development and regulates asexual spore compartmentalization, pigmentation and germination. This is Velvet complex subunit 2 from Cochliobolus heterostrophus (strain C5 / ATCC 48332 / race O) (Southern corn leaf blight fungus).